Here is a 362-residue protein sequence, read N- to C-terminus: 3-isopropylmalate dehydrogenase (362 aa).

76-87 (GPKWGTGSVRPE) is an NAD(+) binding site. Residues R94, R104, R133, and D222 each coordinate substrate. Residues D222, D247, and D251 each coordinate Mg(2+). Position 286 to 297 (286 to 297 (GSAPDLGPGKVN)) interacts with NAD(+).

It belongs to the isocitrate and isopropylmalate dehydrogenases family. As to quaternary structure, homodimer. Mg(2+) serves as cofactor. Requires Mn(2+) as cofactor.

It is found in the cytoplasm. It carries out the reaction (2R,3S)-3-isopropylmalate + NAD(+) = 4-methyl-2-oxopentanoate + CO2 + NADH. Its pathway is amino-acid biosynthesis; L-leucine biosynthesis; L-leucine from 3-methyl-2-oxobutanoate: step 3/4. In terms of biological role, catalyzes the oxidation of 3-carboxy-2-hydroxy-4-methylpentanoate (3-isopropylmalate) to 3-carboxy-4-methyl-2-oxopentanoate. The product decarboxylates to 4-methyl-2 oxopentanoate. The sequence is that of 3-isopropylmalate dehydrogenase (LEU2) from Pichia angusta (Yeast).